Here is a 161-residue protein sequence, read N- to C-terminus: PTS system glucose-specific EIIA component (161 aa).

In terms of domain architecture, PTS EIIA type-1 spans 31–135 (DPVFSKKIVG…SILTPVVISN (105 aa)). Residues His-68 and His-83 each coordinate Zn(2+). The Tele-phosphohistidine intermediate; for EIIA activity role is filled by His-83. His-83 is modified (phosphohistidine; by HPr).

Zn(2+) is required as a cofactor.

The protein localises to the cytoplasm. Its function is as follows. The phosphoenolpyruvate-dependent sugar phosphotransferase system (sugar PTS), a major carbohydrate active transport system, catalyzes the phosphorylation of incoming sugar substrates concomitantly with their translocation across the cell membrane. The enzyme II complex composed of PtsG and Crr is involved in glucose transport. This chain is PTS system glucose-specific EIIA component (crr), found in Buchnera aphidicola subsp. Acyrthosiphon pisum (strain APS) (Acyrthosiphon pisum symbiotic bacterium).